The primary structure comprises 1093 residues: Leucine-rich repeats and immunoglobulin-like domains protein 1 (1093 aa).

The N-terminal stretch at 1 to 34 (MARPVRGGLGAPRRSPCLLLLWLLLLRLEPVTAA) is a signal peptide. The LRRNT domain occupies 35–68 (AGPRAPCAAACTCAGDSLDCGGRGLAALPGDLPS). The Extracellular segment spans residues 35-794 (AGPRAPCAAA…GCRKDGTTVG (760 aa)). The cysteines at positions 45 and 54 are disulfide-linked. LRR repeat units lie at residues 69–90 (WTRS…GFED), 93–114 (NLQE…GAAS), 116–137 (HVVS…QLKA), 140–161 (SLEV…CFPH), 164–185 (PIKE…AFDG), 189–210 (SLLT…AFKL), 212–233 (RLTQ…TFQG), 236–257 (SLEV…AFWG), 260–281 (KMHV…SLYG), 284–305 (ALHQ…GWSF), 308–329 (KLHE…SLAE), 332–353 (SLSV…AFKG), 356–378 (SLRV…SGAF), 383–404 (SLSK…AFSG), and 407–428 (GLEH…AFVK). N-linked (GlcNAc...) asparagine glycosylation is present at N74. N-linked (GlcNAc...) asparagine glycosylation occurs at N150. N-linked (GlcNAc...) asparagine glycosylation is present at N246. N-linked (GlcNAc...) asparagine glycans are attached at residues N292 and N318. The 52-residue stretch at 440-491 (DSFLCDCQLKWLPPWLIGRMLQAFVTATCAHPESLKGQSIFSVPPESFVCDD) folds into the LRRCT domain. 4 disulfides stabilise this stretch: C444–C468, C446–C489, C516–C577, and C620–C672. Ig-like C2-type domains lie at 495 to 594 (PQII…ARLT), 599 to 688 (PSFT…ATLT), and 693 to 779 (PSLV…SQLS). Residue N684 is glycosylated (N-linked (GlcNAc...) asparagine). Residues C714 and C763 are joined by a disulfide bond. Residues 795 to 815 (IFTIAVVSSIVLTSLVWVCII) traverse the membrane as a helical segment. The Cytoplasmic segment spans residues 816-1093 (YQTRKKSEEY…RVPLLLAPKS (278 aa)). Disordered stretches follow at residues 946–983 (AFHP…CSRT) and 1063–1093 (PKAC…APKS).

In terms of assembly, interacts (via extracellular LRR and Ig-like domains) with EGFR/ERBB1, ERBB2, ERBB3 and ERBB4 (via extracellular domain). The physiological relevance of the interaction is controversial; LRIG1 may have low affinity for EGFR, and interaction may occur only when high levels of both proteins are present. As to expression, widely expressed.

It localises to the cell membrane. Acts as a feedback negative regulator of signaling by receptor tyrosine kinases, through a mechanism that involves enhancement of receptor ubiquitination and accelerated intracellular degradation. This chain is Leucine-rich repeats and immunoglobulin-like domains protein 1, found in Homo sapiens (Human).